Here is a 161-residue protein sequence, read N- to C-terminus: Protein UXT homolog (161 aa).

Belongs to the UXT family.

The protein is Protein UXT homolog of Dictyostelium discoideum (Social amoeba).